The sequence spans 654 residues: Protein LYK2 (654 aa).

A signal peptide spans 1–25 (MAVSVSKQYMTSLVVILLFISLSSL). Residues 26 to 241 (SPTSTSHSCD…PSKKKRSKMK (216 aa)) are Extracellular-facing. Intrachain disulfides connect Cys50-Cys102, Cys57-Cys163, and Cys100-Cys161. N-linked (GlcNAc...) asparagine glycosylation is found at Asn103, Asn170, Asn193, and Asn204. A LysM; degenerate repeat occupies 177–217 (YPVGVRDSVSSLAVRFNTTEDAIVSANNKSGVVPLKPALIP). The disordered stretch occupies residues 218–238 (LDHKPEKQGSRKRNPSKKKRS). Residues 227 to 238 (SRKRNPSKKKRS) show a composition bias toward basic residues. The chain crosses the membrane as a helical span at residues 242 to 262 (LMIAVSSAIAGVCGLVTLMVF). Topologically, residues 263 to 654 (GYLHWKKETQ…PLVKKSSIID (392 aa)) are cytoplasmic. In terms of domain architecture, Protein kinase spans 324-619 (TPRKPVLEIY…EIAERVSRLV (296 aa)). Residues 330-338 (LEIYAFEEL) and Lys368 each bind ATP.

It belongs to the protein kinase superfamily. Ser/Thr protein kinase family.

It localises to the cell membrane. May recognize microbe-derived N-acetylglucosamine (NAG)-containing ligands. The polypeptide is Protein LYK2 (LYK2) (Arabidopsis thaliana (Mouse-ear cress)).